Consider the following 113-residue polypeptide: U11-theraphotoxin-Hhn1a (113 aa).

An N-terminal signal peptide occupies residues 1 to 21; it reads MNTVRVTFLLVFVLAVSLGQA. Residues 22-74 constitute a propeptide that is removed on maturation; the sequence is DKDENRMEMQEKTEQGNSYLDFAENLLLQKLEELEAKLLEEDSEESRNSRQKR. Residues 60–69 are compositionally biased toward basic and acidic residues; that stretch reads LEEDSEESRN. Residues 60–83 form a disordered region; the sequence is LEEDSEESRNSRQKRCIGEGVPCD. 3 disulfide bridges follow: cysteine 75/cysteine 90, cysteine 82/cysteine 95, and cysteine 89/cysteine 110.

Belongs to the neurotoxin 14 (magi-1) family. 01 (HNTX-16) subfamily. As to expression, expressed by the venom gland.

The protein resides in the secreted. Probable ion channel inhibitor. This is U11-theraphotoxin-Hhn1a from Cyriopagopus hainanus (Chinese bird spider).